A 120-amino-acid polypeptide reads, in one-letter code: Large ribosomal subunit protein uL18 (120 aa).

This sequence belongs to the universal ribosomal protein uL18 family. Part of the 50S ribosomal subunit; part of the 5S rRNA/L5/L18/L25 subcomplex. Contacts the 5S and 23S rRNAs.

This is one of the proteins that bind and probably mediate the attachment of the 5S RNA into the large ribosomal subunit, where it forms part of the central protuberance. This Methylocella silvestris (strain DSM 15510 / CIP 108128 / LMG 27833 / NCIMB 13906 / BL2) protein is Large ribosomal subunit protein uL18.